Consider the following 158-residue polypeptide: Protein Smg homolog (158 aa).

It belongs to the Smg family.

In Shewanella sp. (strain ANA-3), this protein is Protein Smg homolog.